A 296-amino-acid polypeptide reads, in one-letter code: Enoyl-CoA hydratase AFT3-1 (296 aa).

The Peroxisomal targeting signal type 1 motif lies at 294 to 296; sequence PKL.

Belongs to the enoyl-CoA hydratase/isomerase family.

It localises to the peroxisome. It carries out the reaction a (3S)-3-hydroxyacyl-CoA = a (2E)-enoyl-CoA + H2O. The catalysed reaction is a 4-saturated-(3S)-3-hydroxyacyl-CoA = a (3E)-enoyl-CoA + H2O. Its pathway is mycotoxin biosynthesis. Functionally, enoyl-CoA hydratase; part of the gene clusters that mediate the biosynthesis of the host-selective toxins (HSTs) AF-toxins responsible for Alternaria black spot of strawberry disease by the strawberry pathotype. AF-toxin I and III are valine derivatives of 2,3-dyhydroxy-isovaleric acid and 2-hydroxy-isovaleric acid respectively, while AF II is an isoleucine derivative of 2-hydroxy-valeric acid. These derivatives are bound to a 9,10-epoxy-8-hydroxy-9-methyl-decatrienoic acid (EDA) moiety. On cellular level, AF-toxins affect plasma membrane of susceptible cells and cause a sudden increase in loss of K(+) after a few minutes of toxin treatment. The aldo-keto reductase AFTS1 catalyzes the conversion of 2-keto-isovaleric acid (2-KIV) to 2-hydroxy-isovaleric acid (2-HIV) by reduction of its ketone to an alcohol. The acyl-CoA ligase AFT1, the hydrolase AFT2 and the enoyl-CoA hydratases AFT3 and AFT6, but also the polyketide synthase AFT9, the acyl-CoA dehydrogenase AFT10, the cytochrome P450 monooxygenase AFT11 and the oxidoreductase AFT12 are all involved in the biosynthesis of the AK-, AF- and ACT-toxin common EDA structural moiety. The exact function of each enzyme, and of additional enzymes identified within the AF-toxin clusters have still to be determined. This chain is Enoyl-CoA hydratase AFT3-1 (AFT3-1), found in Alternaria alternata (Alternaria rot fungus).